Here is a 294-residue protein sequence, read N- to C-terminus: Endonuclease G, mitochondrial (294 aa).

The N-terminal 44 residues, 1 to 44, are a transit peptide targeting the mitochondrion; sequence MRALRAGLTLALGAGLGAAAEHWRRREGKAPGLLGRVPLLPVVA. Residue T125 is modified to Phosphothreonine. The active-site Proton acceptor is H138. N169 contacts Mg(2+). The segment at 283–293 is essential for deoxyribonuclease activity; the sequence is AGNLKAITAGS.

It belongs to the DNA/RNA non-specific endonuclease family. In terms of assembly, homodimer; disulfide-linked. Homodimerization is essential for its activity. Interacts with YWHAG. Mg(2+) is required as a cofactor. GSK3-beta-mediated phosphorylation at Thr-125 is necessary for its interaction with YWHAG and the induction of autophagy.

The protein localises to the mitochondrion. Functionally, endonuclease that preferentially catalyzes the cleavage of double-stranded 5-hydroxymethylcytosine (5hmC)-modified DNA. The 5hmC-modified nucleotide does not increase the binding affinity, but instead increases the efficiency of cutting and specifies the site of cleavage for the modified DNAs. Shows significantly higher affinity for four-stranded Holliday junction over duplex and single-stranded DNAs. Promotes conservative recombination when the DNA is 5hmC-modified. Promotes autophagy through the suppression of mTOR by its phosphorylation-mediated interaction with YWHAG and its endonuclease activity-mediated DNA damage response. GSK3-beta mediated phosphorylation of ENDOG enhances its interaction with YWHAG, leading to the release of TSC2 and PIK3C3 from YWHAG resulting in mTOR pathway suppression and autophagy initiation. Promotes cleavage of mtDNA in response to oxidative and nitrosative stress, in turn inducing compensatory mtDNA replication. The chain is Endonuclease G, mitochondrial (Endog) from Mus musculus (Mouse).